Reading from the N-terminus, the 238-residue chain is Flagellar L-ring protein (238 aa).

Residues 1 to 16 form the signal peptide; sequence MRKLILISLCIFFLAS. Cysteine 17 is lipidated: N-palmitoyl cysteine. The S-diacylglycerol cysteine moiety is linked to residue cysteine 17.

Belongs to the FlgH family. As to quaternary structure, the basal body constitutes a major portion of the flagellar organelle and consists of four rings (L,P,S, and M) mounted on a central rod.

It localises to the cell outer membrane. It is found in the bacterial flagellum basal body. Its function is as follows. Assembles around the rod to form the L-ring and probably protects the motor/basal body from shearing forces during rotation. In Thermodesulfovibrio yellowstonii (strain ATCC 51303 / DSM 11347 / YP87), this protein is Flagellar L-ring protein.